Reading from the N-terminus, the 110-residue chain is Phosphoribosyl-ATP pyrophosphatase (110 aa).

This sequence belongs to the PRA-PH family.

It localises to the cytoplasm. The catalysed reaction is 1-(5-phospho-beta-D-ribosyl)-ATP + H2O = 1-(5-phospho-beta-D-ribosyl)-5'-AMP + diphosphate + H(+). It functions in the pathway amino-acid biosynthesis; L-histidine biosynthesis; L-histidine from 5-phospho-alpha-D-ribose 1-diphosphate: step 2/9. In Pseudomonas syringae pv. tomato (strain ATCC BAA-871 / DC3000), this protein is Phosphoribosyl-ATP pyrophosphatase.